A 196-amino-acid polypeptide reads, in one-letter code: Large ribosomal subunit protein bL25 (196 aa).

Belongs to the bacterial ribosomal protein bL25 family. CTC subfamily. In terms of assembly, part of the 50S ribosomal subunit; part of the 5S rRNA/L5/L18/L25 subcomplex. Contacts the 5S rRNA. Binds to the 5S rRNA independently of L5 and L18.

This is one of the proteins that binds to the 5S RNA in the ribosome where it forms part of the central protuberance. This chain is Large ribosomal subunit protein bL25, found in Geotalea daltonii (strain DSM 22248 / JCM 15807 / FRC-32) (Geobacter daltonii).